A 682-amino-acid polypeptide reads, in one-letter code: Epithelial sodium channel subunit alpha (682 aa).

Residues 1–111 lie on the Cytoplasmic side of the membrane; the sequence is MLMRLLPLPS…CSKHNRMKTA (111 aa). Residues 34–69 form a disordered region; the sequence is AQGPLPPQPLQGPLKGDKCEQPGLGPEPTAPQQHTE. The helical transmembrane segment at 112 to 132 threads the bilayer; sequence FWAVLWLCTFGMMYWQFALLF. Over 133 to 586 the chain is Extracellular; that stretch reads GEYFSYPVSL…SQWSLWFGSS (454 aa). Cystine bridges form between C159-C329, C253-C260, C306-C313, C418-C503, C440-C480, C440-C499, C444-C495, C453-C480, C453-C503, and C455-C469. An N-linked (GlcNAc...) asparagine glycan is attached at N191. The segment at 201–267 is gating release of inhibition by proteolysis (GRIP); protease-sensitive region that is responsible for the proteolytic activation of the channel; it reads RSRRSLADTL…SDCFYQTSSS (67 aa). The tract at residues 221–240 is disordered; it reads PEPRRARSSDPSSVRDNNPR. N-linked (GlcNAc...) asparagine glycosylation is present at N504. Residues 587 to 607 form a helical membrane-spanning segment; it reads VLSVVEMAEFMFDLLVITLLM. The Cytoplasmic portion of the chain corresponds to 608–682; the sequence is LLRRFRSRYW…SSAACAPREP (75 aa). The PY motif; recruits WW domain-containing proteins and is thereby required for ubiquitination and inhibition of the channel by NEDD4 and NEDD4L motif lies at 653–657; it reads PPPAY.

It belongs to the amiloride-sensitive sodium channel (TC 1.A.6) family. SCNN1A subfamily. Heterotrimer; containing an alpha/SCNN1A, a beta/SCNN1B and a gamma/SCNN1G subunit. Interacts with WWP1 (via WW domains). Interacts with WWP2 (via WW domains); inhibits the channel. Interacts with BPIFA1; the interaction is indirect via SCNN1B and inhibits the proteolytic processing of SCNN1A and SCNN1G and the activation of ENaC. Interacts with the full-length immature form of PCSK9 (pro-PCSK9). Ubiquitinated. Can be ubiquitinated at multiple sites and undergo monoubiquitination and polyubiquitination. Ubiquitination by NEDD4 or NEDD4L inhibits the ENaC channel through endocytosis, intracellular retention and degradation of its individual subunits. Post-translationally, N-glycosylated. In terms of processing, ENaC is activated through the proteolytic maturation of its subunits. Furin cleaves the SCNN1A subunit, which results in a stepwise increase in the open probability of the channel due to the release of an inhibitory tract. BPIFA1, which is recruited by the SCNN1B subunit, prevents the proteolytic activation of ENaC.

The protein resides in the apical cell membrane. It is found in the cell projection. It localises to the cilium. Its subcellular location is the cytoplasmic granule. The protein localises to the cytoplasm. The protein resides in the cytoplasmic vesicle. It is found in the secretory vesicle. It localises to the acrosome. Its subcellular location is the flagellum. The enzyme catalyses Na(+)(in) = Na(+)(out). With respect to regulation, originally identified and characterized by its inhibition by the diuretic drug amiloride. In terms of biological role, this is one of the three pore-forming subunits of the heterotrimeric epithelial sodium channel (ENaC), a critical regulator of sodium balance and fluid homeostasis. ENaC operates in epithelial tissues, where it mediates the electrodiffusion of sodium ions from extracellular fluid through the apical membrane of cells, with water following osmotically. It plays a key role in maintaining sodium homeostasis through electrogenic sodium reabsorption in the kidneys. Additionally, ENaC is essential for airway surface liquid homeostasis, which is crucial for proper mucus clearance. The sequence is that of Epithelial sodium channel subunit alpha from Cavia porcellus (Guinea pig).